We begin with the raw amino-acid sequence, 131 residues long: Holo-[acyl-carrier-protein] synthase (131 aa).

Positions 8 and 63 each coordinate Mg(2+).

It belongs to the P-Pant transferase superfamily. AcpS family. It depends on Mg(2+) as a cofactor.

It is found in the cytoplasm. The catalysed reaction is apo-[ACP] + CoA = holo-[ACP] + adenosine 3',5'-bisphosphate + H(+). Functionally, transfers the 4'-phosphopantetheine moiety from coenzyme A to a Ser of acyl-carrier-protein. The protein is Holo-[acyl-carrier-protein] synthase of Shewanella halifaxensis (strain HAW-EB4).